A 626-amino-acid chain; its full sequence is Putative L-type lectin-domain containing receptor kinase V.8 (626 aa).

The signal sequence occupies residues 1–21 (MPSELKVLHIVLVLLYTLSSS). Residues 22–212 (TYNSNGNWTL…SIGAFHYMLS (191 aa)) are legume-lectin like. Over 22–245 (TYNSNGNWTL…PKKSSDRTKK (224 aa)) the chain is Extracellular. 4 N-linked (GlcNAc...) asparagine glycosylation sites follow: Asn-28, Asn-59, Asn-112, and Asn-162. The chain crosses the membrane as a helical span at residues 246-266 (ILAVCLTLAVFAVFVASGICF). Over 267–626 (VFYTRHKKVK…LTNSFLSHGR (360 aa)) the chain is Cytoplasmic. In terms of domain architecture, Protein kinase spans 303–562 (FKEKQLLGKG…GLLCAHHTEL (260 aa)). ATP contacts are provided by residues 309–317 (LGKGGFGQV) and Lys-332. The active-site Proton acceptor is the Asp-429.

In the C-terminal section; belongs to the protein kinase superfamily. Ser/Thr protein kinase family. The protein in the N-terminal section; belongs to the leguminous lectin family.

Its subcellular location is the cell membrane. The enzyme catalyses L-seryl-[protein] + ATP = O-phospho-L-seryl-[protein] + ADP + H(+). The catalysed reaction is L-threonyl-[protein] + ATP = O-phospho-L-threonyl-[protein] + ADP + H(+). The polypeptide is Putative L-type lectin-domain containing receptor kinase V.8 (LECRK58) (Arabidopsis thaliana (Mouse-ear cress)).